Consider the following 504-residue polypeptide: Maturase K (504 aa).

The protein belongs to the intron maturase 2 family. MatK subfamily.

Its subcellular location is the plastid. The protein resides in the chloroplast. In terms of biological role, usually encoded in the trnK tRNA gene intron. Probably assists in splicing its own and other chloroplast group II introns. In Nepenthes distillatoria (Pitcher plant), this protein is Maturase K.